The following is a 1407-amino-acid chain: E3 ubiquitin-protein ligase linker protein MMS1 (1407 aa).

Residues 1 to 600 (MLGLRTHGLD…QFQIFRHLRI (600 aa)) form a required for interaction with MMS22 region. A Phosphothreonine modification is found at Thr1294.

As to quaternary structure, component of multiple cullin-RING ligases (CRLs) composed of 4 subunits: the RING protein HRT1, the cullin RTT101, a linker protein MMS1, and one of many alternative substrate receptors belonging to a protein family described as DCAF (DDB1- and CUL4-associated factor). Component of a RTT101(MMS1-MMS22) complex with the substrate receptor MMS22. This complex further interacts with RTT107 and CTF4 to form RTT101-MMS1-MMS22-RTT107 and RTT101-MMS1-MMS22-CTF4 complexes respectively. Component of a RTT101(MSS1-CRT10) complex with the substrate receptor CRT10. Component of a RTT101(MSS1-ESC2) complex with the potential substrate receptor ESC2. Component of a RTT101(MSS1-ORC5) complex with the potential substrate receptor ORC5. Interacts with RTT101 (via N-ter). Interacts (via N-ter) with MMS22 (via C-ter). Interacts with CRT10.

It localises to the nucleus. Its function is as follows. Component of multiple cullin-RING-based E3 ubiquitin-protein ligase complexes (CRLs), which mediate the ubiquitination of target proteins. The CRL associates with CDC34 as the E2 ubiquitin-conjugating enzyme. The functional specificity of the CRL depends on the type of the associated substrate receptor protein. RTT101(MMS1-MMS22) promotes fork progression through damaged DNA or natural pause sites by stabilizing replication proteins like the replication fork-pausing complex (FPC) and leading-strand polymerase at stalled replication forks. RTT101(MMS1-MMS22) ubiquitinates the acetylated histones H3K56ac-H4 at lysine residues H3K121, H3K122 and H3K125. Ubiquitination is required for efficient histone deposition during replication-coupled nucleosome assembly, probably by facilitating the transfer of H3-H4 from ASF1 to other chaperones involved in histone deposition. RTT101(MMS1-CRT10) may regulate nucleotide synthesis through transcriptional regulation of ribonucleotide reductase. RTT101(MMS1) is also involved in the non-functional rRNA decay (NRD) of 25S rRNA through the selective, ubiquitination-dependent degradation of nonfunctional ribosomal particles. Involved in the regulation of TY1 transposition. The polypeptide is E3 ubiquitin-protein ligase linker protein MMS1 (MMS1) (Saccharomyces cerevisiae (strain ATCC 204508 / S288c) (Baker's yeast)).